A 128-amino-acid chain; its full sequence is MNFIKEFREFAMRGNVVDMAIGVIIGSAFGKIVSSLVSDIFTPVLGILTGGIDFKDMKFVLAQAQGDVPAVTLNYGLFIQNVIDFIIIAFAIFMMIKVINKVRKPEEKKTAPKAETLLTEIRDLLKNK.

2 consecutive transmembrane segments (helical) span residues 10 to 30 (FAMRGNVVDMAIGVIIGSAFG) and 76 to 96 (GLFIQNVIDFIIIAFAIFMMI).

This sequence belongs to the MscL family. As to quaternary structure, homopentamer.

It is found in the cell inner membrane. Functionally, channel that opens in response to stretch forces in the membrane lipid bilayer. May participate in the regulation of osmotic pressure changes within the cell. This Haemophilus influenzae (strain 86-028NP) protein is Large-conductance mechanosensitive channel.